The sequence spans 229 residues: uncharacterized protein (229 aa).

This is an uncharacterized protein from Borreliella burgdorferi (strain ATCC 35210 / DSM 4680 / CIP 102532 / B31) (Borrelia burgdorferi).